A 139-amino-acid chain; its full sequence is Large-conductance mechanosensitive channel (139 aa).

A run of 2 helical transmembrane segments spans residues 16-36 (VIDL…VKSL) and 79-99 (GAFV…FLLV).

The protein belongs to the MscL family. Homopentamer.

It is found in the cell inner membrane. Functionally, channel that opens in response to stretch forces in the membrane lipid bilayer. May participate in the regulation of osmotic pressure changes within the cell. The protein is Large-conductance mechanosensitive channel of Caulobacter vibrioides (strain ATCC 19089 / CIP 103742 / CB 15) (Caulobacter crescentus).